The following is a 545-amino-acid chain: CTP synthase (545 aa).

Residues 1 to 265 form an amidoligase domain region; sequence MSKYIFVTGG…DDLVVQNLGL (265 aa). CTP is bound at residue Ser-13. Residue Ser-13 coordinates UTP. ATP-binding positions include 14–19 and Asp-71; that span reads SLGKGA. Asp-71 and Glu-139 together coordinate Mg(2+). CTP-binding positions include 146–148, 186–191, and Lys-222; these read DIE and KTKPTQ. UTP is bound by residues 186–191 and Lys-222; that span reads KTKPTQ. Residues 290 to 541 enclose the Glutamine amidotransferase type-1 domain; sequence VIALVGKYVG…MRAAIAQRER (252 aa). Gly-351 is an L-glutamine binding site. The active-site Nucleophile; for glutamine hydrolysis is the Cys-378. Residues 379–382, Glu-402, and Arg-469 contribute to the L-glutamine site; that span reads LGMQ. Residues His-514 and Glu-516 contribute to the active site.

Belongs to the CTP synthase family. Homotetramer.

The enzyme catalyses UTP + L-glutamine + ATP + H2O = CTP + L-glutamate + ADP + phosphate + 2 H(+). The catalysed reaction is L-glutamine + H2O = L-glutamate + NH4(+). It carries out the reaction UTP + NH4(+) + ATP = CTP + ADP + phosphate + 2 H(+). It functions in the pathway pyrimidine metabolism; CTP biosynthesis via de novo pathway; CTP from UDP: step 2/2. Its activity is regulated as follows. Allosterically activated by GTP, when glutamine is the substrate; GTP has no effect on the reaction when ammonia is the substrate. The allosteric effector GTP functions by stabilizing the protein conformation that binds the tetrahedral intermediate(s) formed during glutamine hydrolysis. Inhibited by the product CTP, via allosteric rather than competitive inhibition. In terms of biological role, catalyzes the ATP-dependent amination of UTP to CTP with either L-glutamine or ammonia as the source of nitrogen. Regulates intracellular CTP levels through interactions with the four ribonucleotide triphosphates. The chain is CTP synthase from Acidithiobacillus ferrooxidans (strain ATCC 23270 / DSM 14882 / CIP 104768 / NCIMB 8455) (Ferrobacillus ferrooxidans (strain ATCC 23270)).